A 433-amino-acid polypeptide reads, in one-letter code: Monodehydroascorbate reductase (433 aa).

Residues 13–16 (GGVS), Glu40, Arg47, Lys52, Ile95, and 146–147 (RE) contribute to the FAD site. Residues 171-177 (GGYIGLE), Glu195, Arg201, and Gly260 each bind NAD(+). NADP(+) is bound at residue 173–177 (YIGLE). NADP(+)-binding residues include Arg201 and Gly260. FAD is bound at residue Asp297. An NAD(+)-binding site is contributed by 313–314 (EH). 313-314 (EH) contacts NADP(+). Position 315 (Val315) interacts with FAD. Arg319 is a binding site for L-ascorbate. FAD is bound at residue Tyr348. Tyr348 contacts NAD(+). Residue Tyr348 participates in NADP(+) binding. Arg350 provides a ligand contact to L-ascorbate.

It belongs to the FAD-dependent oxidoreductase family. It depends on FAD as a cofactor. Expressed in leaves, and to a lesser degree in stems, roots and all stages of fruit.

The protein resides in the cytoplasm. It catalyses the reaction 2 monodehydro-L-ascorbate radical + NADH + H(+) = 2 L-ascorbate + NAD(+). Catalyzes the conversion of monodehydroascorbate to ascorbate, oxidizing NADH in the process. This chain is Monodehydroascorbate reductase, found in Solanum lycopersicum (Tomato).